Reading from the N-terminus, the 449-residue chain is Bifunctional protein GlmU (449 aa).

The tract at residues 1–226 is pyrophosphorylase; the sequence is MVIVAVLAAG…YEEILGVNDR (226 aa). UDP-N-acetyl-alpha-D-glucosamine-binding positions include 7-10, lysine 21, glutamine 73, and 78-79; these read LAAG and GT. Aspartate 103 lines the Mg(2+) pocket. UDP-N-acetyl-alpha-D-glucosamine-binding residues include glycine 140, glutamate 155, asparagine 170, and asparagine 224. Asparagine 224 is a Mg(2+) binding site. The interval 227–247 is linker; the sequence is VQLAAAYQVLQNRIKKAWMQA. An N-acetyltransferase region spans residues 248-449; that stretch reads GVTLIDPASI…VVKPNWEPEA (202 aa). The UDP-N-acetyl-alpha-D-glucosamine site is built by arginine 329 and lysine 347. Histidine 359 functions as the Proton acceptor in the catalytic mechanism. Residues tyrosine 362 and asparagine 373 each contribute to the UDP-N-acetyl-alpha-D-glucosamine site. Acetyl-CoA-binding positions include alanine 376, 382–383, alanine 419, and arginine 436; that span reads NY.

It in the N-terminal section; belongs to the N-acetylglucosamine-1-phosphate uridyltransferase family. This sequence in the C-terminal section; belongs to the transferase hexapeptide repeat family. Homotrimer. Mg(2+) is required as a cofactor.

Its subcellular location is the cytoplasm. The enzyme catalyses alpha-D-glucosamine 1-phosphate + acetyl-CoA = N-acetyl-alpha-D-glucosamine 1-phosphate + CoA + H(+). It catalyses the reaction N-acetyl-alpha-D-glucosamine 1-phosphate + UTP + H(+) = UDP-N-acetyl-alpha-D-glucosamine + diphosphate. The protein operates within nucleotide-sugar biosynthesis; UDP-N-acetyl-alpha-D-glucosamine biosynthesis; N-acetyl-alpha-D-glucosamine 1-phosphate from alpha-D-glucosamine 6-phosphate (route II): step 2/2. Its pathway is nucleotide-sugar biosynthesis; UDP-N-acetyl-alpha-D-glucosamine biosynthesis; UDP-N-acetyl-alpha-D-glucosamine from N-acetyl-alpha-D-glucosamine 1-phosphate: step 1/1. It functions in the pathway bacterial outer membrane biogenesis; LPS lipid A biosynthesis. Catalyzes the last two sequential reactions in the de novo biosynthetic pathway for UDP-N-acetylglucosamine (UDP-GlcNAc). The C-terminal domain catalyzes the transfer of acetyl group from acetyl coenzyme A to glucosamine-1-phosphate (GlcN-1-P) to produce N-acetylglucosamine-1-phosphate (GlcNAc-1-P), which is converted into UDP-GlcNAc by the transfer of uridine 5-monophosphate (from uridine 5-triphosphate), a reaction catalyzed by the N-terminal domain. This Thermosynechococcus vestitus (strain NIES-2133 / IAM M-273 / BP-1) protein is Bifunctional protein GlmU.